We begin with the raw amino-acid sequence, 975 residues long: Glycine dehydrogenase (decarboxylating) (975 aa).

K723 is subject to N6-(pyridoxal phosphate)lysine.

It belongs to the GcvP family. In terms of assembly, the glycine cleavage system is composed of four proteins: P, T, L and H. Requires pyridoxal 5'-phosphate as cofactor.

It catalyses the reaction N(6)-[(R)-lipoyl]-L-lysyl-[glycine-cleavage complex H protein] + glycine + H(+) = N(6)-[(R)-S(8)-aminomethyldihydrolipoyl]-L-lysyl-[glycine-cleavage complex H protein] + CO2. Its function is as follows. The glycine cleavage system catalyzes the degradation of glycine. The P protein binds the alpha-amino group of glycine through its pyridoxal phosphate cofactor; CO(2) is released and the remaining methylamine moiety is then transferred to the lipoamide cofactor of the H protein. This Burkholderia pseudomallei (strain 668) protein is Glycine dehydrogenase (decarboxylating).